The chain runs to 374 residues: UPF0496 protein At3g28270 (374 aa).

The stretch at 171–210 forms a coiled coil; that stretch reads KVLTTQFERIKKQQESLLEEVSETRKKIQDEISNLEKKTL. 2 consecutive transmembrane segments (helical) span residues 214 to 234 and 235 to 255; these read VVFG…IATG and VGAA…GWAG. A coiled-coil region spans residues 256–321; the sequence is VYTTLDKKKD…MLKLVDNAID (66 aa).

The protein belongs to the UPF0496 family.

It localises to the membrane. The polypeptide is UPF0496 protein At3g28270 (Arabidopsis thaliana (Mouse-ear cress)).